The sequence spans 82 residues: Small ribosomal subunit protein uS17 (82 aa).

It belongs to the universal ribosomal protein uS17 family. As to quaternary structure, part of the 30S ribosomal subunit.

One of the primary rRNA binding proteins, it binds specifically to the 5'-end of 16S ribosomal RNA. The protein is Small ribosomal subunit protein uS17 of Shewanella sp. (strain W3-18-1).